The chain runs to 174 residues: Ubiquitin-like protein 4B (174 aa).

One can recognise a Ubiquitin-like domain in the interval 1–76 (MFLTVKLLLG…INVIMQPLEK (76 aa)). Basic and acidic residues predominate over residues 141–156 (EPHVEPAGERELEAKA). A disordered region spans residues 141–174 (EPHVEPAGERELEAKARPQSSCDMEEKEEAAADQ). Over residues 163-174 (DMEEKEEAAADQ) the composition is skewed to acidic residues.

It is found in the cytoplasm. The sequence is that of Ubiquitin-like protein 4B (UBL4B) from Homo sapiens (Human).